Reading from the N-terminus, the 491-residue chain is MDPFVVLVLCLSFLLVLSLWRQRSARGNLPPGPTPLPIIGNYHLIDMKDIGQCLTNFSKTYGPVFTLYFGSQPIVVLHGYEAIKEALIDHGEEFSGRGRIPVFDKVSTGKGIGFSHGNVWKATRVFTVNTLRNLGMGKRTIENKVQEEAQWLMKELKKTNGSPCDPQFIIGCAPCNVICSIVFQNRFDYKDKDFLSLIGKVNECTEILSSPGCQIFNAVPILIDYCPGSHNKLFKNHTWIKSYLLGKIKEHEESLDVTNPRDFIDYFLIQRRQKNGIEHMDYTIEHLATLVTDLVFGGTETLSSTMRFALLLLMKHTHITAKVQEEIDNVIGRHRSPCMQDRNHMPYTNAMVHEVQRYIDLGPNGVVHEVTCDTKFRNYFIPKGTQVMTSLTSVLHDSTEFPNPEVFDPGHFLDDNGNFKKSDYFVPFSAGKRICVGESLARMELFLFLTTILQNFKLKPLVDPKDIDMTPKHSGFSKIPPNFQMCFIPVE.

An N-terminal signal peptide occupies residues 1-25 (MDPFVVLVLCLSFLLVLSLWRQRSA). A heme-binding site is contributed by C435.

This sequence belongs to the cytochrome P450 family. Requires heme as cofactor. Liver, brain, kidney, and intestine, with trace amounts in lung and heart. Expressed throughout the intestinal tract, with higher expression levels in jejunum, cecum and colon.

It localises to the endoplasmic reticulum membrane. Its subcellular location is the microsome membrane. It carries out the reaction (5Z,8Z,11Z,14Z)-eicosatetraenoate + reduced [NADPH--hemoprotein reductase] + O2 = 16(R)-hydroxy-(5Z,8Z,11Z,14Z)-eicosatetraenoate + oxidized [NADPH--hemoprotein reductase] + H2O + H(+). The enzyme catalyses (5Z,8Z,11Z,14Z)-eicosatetraenoate + reduced [NADPH--hemoprotein reductase] + O2 = 16(S)-hydroxy-(5Z,8Z,11Z,14Z)-eicosatetraenoate + oxidized [NADPH--hemoprotein reductase] + H2O + H(+). The catalysed reaction is (5Z,8Z,11Z,14Z)-eicosatetraenoate + reduced [NADPH--hemoprotein reductase] + O2 = (14R,15S)-epoxy-(5Z,8Z,11Z)-eicosatrienoate + oxidized [NADPH--hemoprotein reductase] + H2O + H(+). It catalyses the reaction (5Z,8Z,11Z,14Z)-eicosatetraenoate + reduced [NADPH--hemoprotein reductase] + O2 = (14S,15R)-epoxy-(5Z,8Z,11Z)-eicosatrienoate + oxidized [NADPH--hemoprotein reductase] + H2O + H(+). The protein operates within lipid metabolism; arachidonate metabolism. In terms of biological role, a cytochrome P450 monooxygenase that may play a major role in the metabolism of arachidonic acid in the intestinal tract. Exhibits regioselective hydroxylase and epoxidase activity toward arachidonic acid, producing 16(R)-hydroxyeicosatetraenoic acid (HETE) and (14R,15S)-epoxyeicosatrienoic acid (EpETrE) as major products. Mechanistically, uses molecular oxygen inserting one oxygen atom into a substrate, and reducing the second into a water molecule, with two electrons provided by NADPH via cytochrome P450 reductase (CPR; NADPH-ferrihemoprotein reductase). In Mus musculus (Mouse), this protein is Cytochrome P450 2C40.